Here is an 860-residue protein sequence, read N- to C-terminus: Envelope glycoprotein gp160 (860 aa).

Residues 1-22 form the signal peptide; the sequence is MEPGRNQLFVVILLTSACLVYC. The Extracellular portion of the chain corresponds to 23-678; it reads SQYVTVFYGI…LTSWVKYIQY (656 aa). An N-linked (GlcNAc...) asparagine; by host glycan is attached at N37. The cysteines at positions 44 and 57 are disulfide-linked. N70, N79, N112, N119, N144, N152, N194, N206, N238, N241, N272, N278, N289, N300, N310, N365, N371, N398, N410, N460, and N465 each carry an N-linked (GlcNAc...) asparagine; by host glycan. 5 disulfide bridges follow: C101–C214, C108–C205, C113–C166, C227–C257, and C237–C249. Residues 113–165 are V1; it reads CSRVQGNTTTPNPRTSSSTTSRPPTSAASIINETSNCIENNTCAGLGYEEMMQ. The disordered stretch occupies residues 118–139; sequence GNTTTPNPRTSSSTTSRPPTSA. Over residues 119–139 the composition is skewed to low complexity; it reads NTTTPNPRTSSSTTSRPPTSA. The V2 stretch occupies residues 166–205; it reads CEFNMKGLEQDKKRRYKDTWYLEDVVCDNTTAGTCYMRHC. Positions 305-337 are V3; the sequence is CKRPGNKTVLPITLMSGLVFHSQPINTRPRQAW. An intrachain disulfide couples C305 to C338. 2 cysteine pairs are disulfide-bonded: C390–C444 and C397–C417. Residues 397-417 are V4; that stretch reads CNMTWFLNWVEDKNQTRRNYC. The V5 stretch occupies residues 460–468; it reads NRTHTNITF. The interval 511-531 is fusion peptide; it reads GVFVLGFLGFLATAGSAMGAR. Residues 574–590 are immunosuppression; sequence LQARVTAIEKYLKHQAQ. N-linked (GlcNAc...) asparagine; by host glycans are attached at residues N610, N619, and N635. A coiled-coil region spans residues 623–644; sequence QEWEKQVRYLEANISQSLEEAQ. The MPER; binding to GalCer stretch occupies residues 656–677; the sequence is KLNSWDILGNWFDLTSWVKYIQ. Residues 679-699 traverse the membrane as a helical segment; it reads GVHIVVGIIALRIAIYVVQLL. Residues 700-860 lie on the Cytoplasmic side of the membrane; it reads SRFRKGYRPV…IRQGAELALL (161 aa). The YXXV motif; contains endocytosis signal motif lies at 706–709; it reads YRPV. Residue C772 is the site of S-palmitoyl cysteine; by host attachment. The short motif at 859-860 is the Di-leucine internalization motif element; that stretch reads LL.

The mature envelope protein (Env) consists of a homotrimer of non-covalently associated gp120-gp41 heterodimers. The resulting complex protrudes from the virus surface as a spike. There seems to be as few as 10 spikes on the average virion. Interacts with human CD4, CCR5 and CXCR4, to form a P4HB/PDI-CD4-CXCR4-gp120 complex. Gp120 also interacts with the C-type lectins CD209/DC-SIGN and CLEC4M/DC-SIGNR (collectively referred to as DC-SIGN(R)). Gp120 and gp41 interact with GalCer. As to quaternary structure, the mature envelope protein (Env) consists of a homotrimer of non-covalently associated gp120-gp41 heterodimers. The resulting complex protrudes from the virus surface as a spike. There seems to be as few as 10 spikes on the average virion. In terms of processing, specific enzymatic cleavages in vivo yield mature proteins. Envelope glycoproteins are synthesized as an inactive precursor that is heavily N-glycosylated and processed likely by host cell furin in the Golgi to yield the mature SU and TM proteins. The cleavage site between SU and TM requires the minimal sequence [KR]-X-[KR]-R. Palmitoylation of the transmembrane protein and of Env polyprotein (prior to its proteolytic cleavage) is essential for their association with host cell membrane lipid rafts. Palmitoylation is therefore required for envelope trafficking to classical lipid rafts, but not for viral replication.

It is found in the virion membrane. It localises to the host cell membrane. Its subcellular location is the host endosome membrane. In terms of biological role, the surface protein gp120 (SU) attaches the virus to the host lymphoid cell by binding to the primary receptor CD4. This interaction induces a structural rearrangement creating a high affinity binding site for a chemokine coreceptor like CXCR4 and/or CCR5. This peculiar 2 stage receptor-interaction strategy allows gp120 to maintain the highly conserved coreceptor-binding site in a cryptic conformation, protected from neutralizing antibodies. Since CD4 also displays a binding site for the disulfide-isomerase P4HB/PDI, a P4HB/PDI-CD4-CXCR4-gp120 complex may form. In that complex, P4HB/PDI could reach and reduce gp120 disulfide bonds, causing major conformational changes in gp120. TXN, another PDI family member could also be involved in disulfide rearrangements in Env during fusion. These changes are transmitted to the transmembrane protein gp41 and are thought to activate its fusogenic potential by unmasking its fusion peptide. Functionally, the surface protein gp120 is a ligand for CD209/DC-SIGN and CLEC4M/DC-SIGNR, which are respectively found on dendritic cells (DCs), and on endothelial cells of liver sinusoids and lymph node sinuses. These interactions allow capture of viral particles at mucosal surfaces by these cells and subsequent transmission to permissive cells. DCs are professional antigen presenting cells, critical for host immunity by inducing specific immune responses against a broad variety of pathogens. They act as sentinels in various tissues where they take up antigen, process it, and present it to T-cells following migration to lymphoid organs. HIV subverts the migration properties of dendritic cells to gain access to CD4+ T-cells in lymph nodes. Virus transmission to permissive T-cells occurs either in trans (without DCs infection, through viral capture and transmission), or in cis (following DCs productive infection, through the usual CD4-gp120 interaction), thereby inducing a robust infection. In trans infection, bound virions remain infectious over days and it is proposed that they are not degraded, but protected in non-lysosomal acidic organelles within the DCs close to the cell membrane thus contributing to the viral infectious potential during DCs' migration from the periphery to the lymphoid tissues. On arrival at lymphoid tissues, intact virions recycle back to DCs' cell surface allowing virus transmission to CD4+ T-cells. Virion capture also seems to lead to MHC-II-restricted viral antigen presentation, and probably to the activation of HIV-specific CD4+ cells. Its function is as follows. The transmembrane protein gp41 (TM) acts as a class I viral fusion protein. Under the current model, the protein has at least 3 conformational states: pre-fusion native state, pre-hairpin intermediate state, and post-fusion hairpin state. During fusion of viral and target intracellular membranes, the coiled coil regions (heptad repeats) assume a trimer-of-hairpins structure, positioning the fusion peptide in close proximity to the C-terminal region of the ectodomain. The formation of this structure appears to drive apposition and subsequent fusion of viral and target cell membranes. Complete fusion occurs in host cell endosomes and is dynamin-dependent, however some lipid transfer might occur at the plasma membrane. The virus undergoes clathrin-dependent internalization long before endosomal fusion, thus minimizing the surface exposure of conserved viral epitopes during fusion and reducing the efficacy of inhibitors targeting these epitopes. Membranes fusion leads to delivery of the nucleocapsid into the cytoplasm. The envelope glycoprotein gp160 precursor down-modulates cell surface CD4 antigen by interacting with it in the endoplasmic reticulum and blocking its transport to the cell surface. In terms of biological role, the gp120-gp41 heterodimer seems to contribute to T-cell depletion during HIV-1 infection. The envelope glycoproteins expressed on the surface of infected cells induce apoptosis through an interaction with uninfected cells expressing the receptor (CD4) and the coreceptors CXCR4 or CCR5. This type of bystander killing may be obtained by at least three distinct mechanisms. First, the interaction between the 2 cells can induce cellular fusion followed by nuclear fusion within the syncytium. Syncytia are condemned to die from apoptosis. Second, the 2 interacting cells may not fuse entirely and simply exchange plasma membrane lipids, after a sort of hemifusion process, followed by rapid death. Third, it is possible that virus-infected cells, on the point of undergoing apoptosis, fuse with CD4-expressing cells, in which case apoptosis is rapidly transmitted from one cell to the other and thus occurs in a sort of contagious fashion. Functionally, the gp120-gp41 heterodimer allows rapid transcytosis of the virus through CD4 negative cells such as simple epithelial monolayers of the intestinal, rectal and endocervical epithelial barriers. Both gp120 and gp41 specifically recognize glycosphingolipids galactosyl-ceramide (GalCer) or 3' sulfo-galactosyl-ceramide (GalS) present in the lipid rafts structures of epithelial cells. Binding to these alternative receptors allows the rapid transcytosis of the virus through the epithelial cells. This transcytotic vesicle-mediated transport of virions from the apical side to the basolateral side of the epithelial cells does not involve infection of the cells themselves. The polypeptide is Envelope glycoprotein gp160 (env) (Homo sapiens (Human)).